Reading from the N-terminus, the 412-residue chain is Proteasome-activating nucleotidase 2 (412 aa).

Residues 28-74 (LRQHFERMVDVNRELDQRLQNADDRHAELVDEVDQMKARNEALKTAS) are a coiled coil. ATP contacts are provided by residues 196–201 (GTGKTM) and His335. A docks into pockets in the proteasome alpha-ring to cause gate opening region spans residues 409 to 412 (DYQY).

The protein belongs to the AAA ATPase family. In terms of assembly, homohexamer. The hexameric complex has a two-ring architecture resembling a top hat that caps the 20S proteasome core at one or both ends. Upon ATP-binding, the C-terminus of PAN interacts with the alpha-rings of the proteasome core by binding to the intersubunit pockets.

The protein localises to the cytoplasm. In terms of biological role, ATPase which is responsible for recognizing, binding, unfolding and translocation of substrate proteins into the archaeal 20S proteasome core particle. Is essential for opening the gate of the 20S proteasome via an interaction with its C-terminus, thereby allowing substrate entry and access to the site of proteolysis. Thus, the C-termini of the proteasomal ATPase function like a 'key in a lock' to induce gate opening and therefore regulate proteolysis. Unfolding activity requires energy from ATP hydrolysis, whereas ATP binding alone promotes ATPase-20S proteasome association which triggers gate opening, and supports translocation of unfolded substrates. In Haloferax volcanii (strain ATCC 29605 / DSM 3757 / JCM 8879 / NBRC 14742 / NCIMB 2012 / VKM B-1768 / DS2) (Halobacterium volcanii), this protein is Proteasome-activating nucleotidase 2.